The primary structure comprises 94 residues: Large ribosomal subunit protein bL27 (94 aa).

A propeptide spanning residues 1-9 is cleaved from the precursor; the sequence is MNLANLQLF. The disordered stretch occupies residues 11-34; sequence HKKGGGSTSNGRDSQAKRLGAKAA.

Belongs to the bacterial ribosomal protein bL27 family. The N-terminus is cleaved by ribosomal processing cysteine protease Prp.

The sequence is that of Large ribosomal subunit protein bL27 from Streptococcus pyogenes serotype M3 (strain ATCC BAA-595 / MGAS315).